An 874-amino-acid polypeptide reads, in one-letter code: Alanine--tRNA ligase (874 aa).

Zn(2+)-binding residues include His562, His566, Cys665, and His669.

Belongs to the class-II aminoacyl-tRNA synthetase family. Zn(2+) is required as a cofactor.

Its subcellular location is the cytoplasm. The catalysed reaction is tRNA(Ala) + L-alanine + ATP = L-alanyl-tRNA(Ala) + AMP + diphosphate. Catalyzes the attachment of alanine to tRNA(Ala) in a two-step reaction: alanine is first activated by ATP to form Ala-AMP and then transferred to the acceptor end of tRNA(Ala). Also edits incorrectly charged Ser-tRNA(Ala) and Gly-tRNA(Ala) via its editing domain. This chain is Alanine--tRNA ligase, found in Pseudomonas fluorescens (strain ATCC BAA-477 / NRRL B-23932 / Pf-5).